The following is a 451-amino-acid chain: Serine--tRNA ligase (451 aa).

Residue 258–260 coordinates L-serine; that stretch reads TSE. An ATP-binding site is contributed by 289–291; it reads RSE. Residue Glu312 coordinates L-serine. Residue 376–379 coordinates ATP; sequence EISS. Position 411 (Ser411) interacts with L-serine.

This sequence belongs to the class-II aminoacyl-tRNA synthetase family. Type-1 seryl-tRNA synthetase subfamily. Homodimer. The tRNA molecule binds across the dimer.

It localises to the cytoplasm. It carries out the reaction tRNA(Ser) + L-serine + ATP = L-seryl-tRNA(Ser) + AMP + diphosphate + H(+). It catalyses the reaction tRNA(Sec) + L-serine + ATP = L-seryl-tRNA(Sec) + AMP + diphosphate + H(+). It participates in aminoacyl-tRNA biosynthesis; selenocysteinyl-tRNA(Sec) biosynthesis; L-seryl-tRNA(Sec) from L-serine and tRNA(Sec): step 1/1. In terms of biological role, catalyzes the attachment of serine to tRNA(Ser). Is also able to aminoacylate tRNA(Sec) with serine, to form the misacylated tRNA L-seryl-tRNA(Sec), which will be further converted into selenocysteinyl-tRNA(Sec). In Bordetella pertussis (strain Tohama I / ATCC BAA-589 / NCTC 13251), this protein is Serine--tRNA ligase.